Consider the following 275-residue polypeptide: Large ribosomal subunit protein uL2 (275 aa).

The segment at 222–275 (GVAMNPVDHPHGGGEGRNKGRHPTSPWGQKSKGLKTRHNKRTDNMIIRRRAKKK) is disordered. Residues 229–239 (DHPHGGGEGRN) show a composition bias toward basic and acidic residues.

This sequence belongs to the universal ribosomal protein uL2 family. In terms of assembly, part of the 50S ribosomal subunit. Forms a bridge to the 30S subunit in the 70S ribosome.

One of the primary rRNA binding proteins. Required for association of the 30S and 50S subunits to form the 70S ribosome, for tRNA binding and peptide bond formation. It has been suggested to have peptidyltransferase activity; this is somewhat controversial. Makes several contacts with the 16S rRNA in the 70S ribosome. The sequence is that of Large ribosomal subunit protein uL2 from Psychrobacter cryohalolentis (strain ATCC BAA-1226 / DSM 17306 / VKM B-2378 / K5).